Reading from the N-terminus, the 811-residue chain is Leucine--tRNA ligase (811 aa).

The 'HIGH' region motif lies at 38–49 (SYPSGSNLHAGH). Residues 570–574 (KMSKS) carry the 'KMSKS' region motif. ATP is bound at residue K573.

It belongs to the class-I aminoacyl-tRNA synthetase family.

The protein resides in the cytoplasm. It catalyses the reaction tRNA(Leu) + L-leucine + ATP = L-leucyl-tRNA(Leu) + AMP + diphosphate. This is Leucine--tRNA ligase from Clostridium kluyveri (strain ATCC 8527 / DSM 555 / NBRC 12016 / NCIMB 10680 / K1).